The chain runs to 115 residues: Somatostatin-1 (115 aa).

A signal peptide spans Met-1–Ala-24. A propeptide spanning residues Ala-25 to Arg-88 is cleaved from the precursor. Residues Asn-65–Leu-95 are disordered. Over residues Arg-75–Arg-88 the composition is skewed to basic and acidic residues. An intrachain disulfide couples Cys-104 to Cys-115.

It belongs to the somatostatin family.

Its subcellular location is the secreted. In terms of biological role, somatostatin inhibits the release of somatotropin. The polypeptide is Somatostatin-1 (sst1) (Protopterus annectens (African lungfish)).